A 508-amino-acid chain; its full sequence is Photosystem II CP47 reaction center protein (508 aa).

6 helical membrane passes run 21-36, 101-115, 140-156, 203-218, 237-252, and 457-472; these read AVHIMHTALVSGWAGS, IVFSGLCFLAAIWHW, GIHLFLAGVACFGFGAF, IAAGTLGILAGLFHLS, VLSSSIAAVFFAAFVV, and TFALLFFFGHIWHGAR.

Belongs to the PsbB/PsbC family. PsbB subfamily. In terms of assembly, PSII is composed of 1 copy each of membrane proteins PsbA, PsbB, PsbC, PsbD, PsbE, PsbF, PsbH, PsbI, PsbJ, PsbK, PsbL, PsbM, PsbT, PsbX, PsbY, PsbZ, Psb30/Ycf12, at least 3 peripheral proteins of the oxygen-evolving complex and a large number of cofactors. It forms dimeric complexes. Binds multiple chlorophylls. PSII binds additional chlorophylls, carotenoids and specific lipids. serves as cofactor.

The protein localises to the plastid. It is found in the chloroplast thylakoid membrane. Functionally, one of the components of the core complex of photosystem II (PSII). It binds chlorophyll and helps catalyze the primary light-induced photochemical processes of PSII. PSII is a light-driven water:plastoquinone oxidoreductase, using light energy to abstract electrons from H(2)O, generating O(2) and a proton gradient subsequently used for ATP formation. The sequence is that of Photosystem II CP47 reaction center protein from Brachypodium distachyon (Purple false brome).